The chain runs to 956 residues: MAM domain-containing glycosylphosphatidylinositol anchor protein 1 (956 aa).

The N-terminal stretch at 1 to 18 (MEVTCLLLLALIPFHCRG) is a signal peptide. Ig-like domains follow at residues 24–123 (PAQA…KSIR) and 132–230 (PVLT…KSIT). Asparagine 42 carries an N-linked (GlcNAc...) asparagine glycan. Cystine bridges form between cysteine 60–cysteine 108 and cysteine 157–cysteine 214. N-linked (GlcNAc...) asparagine glycans are attached at residues asparagine 235, asparagine 257, and asparagine 307. Ig-like domains lie at 240–323 (PTLK…KTVN), 338–432 (PDMI…VEVN), 440–534 (PTIS…VQLT), and 539–632 (PEVE…FQVS). Intrachain disulfides connect cysteine 262–cysteine 308, cysteine 357–cysteine 415, cysteine 463–cysteine 514, and cysteine 560–cysteine 616. The Fibronectin type-III domain maps to 644 to 744 (TPNPTRSHKL…SRVIHYTEPI (101 aa)). An MAM domain is found at 752-919 (NTCHFEDEKI…VTLKKGECPR (168 aa)). Positions 780-789 (LTQNPKRSPN) are enriched in polar residues. A disordered region spans residues 780-799 (LTQNPKRSPNTGPPTDISGT). Serine 933 is lipidated: GPI-anchor amidated serine. A propeptide spans 934–956 (GAPRLSSLQLWGSMTIFLLALQR) (removed in mature form).

As to quaternary structure, interacts heterophilically through its MAM domain with proteins in axon-rich regions and through its Ig-like domains with proteins in differentiating muscle. Interacts (through the Ig-like domains) with NLGN2. High levels detected in developing central and peripheral nervous systems with little expression elsewhere. In brain, highest levels in cerebral cortex and hindbrain at E15. At postnatal day 1, highest levels in basilar pons and superficial layers of the neocortex. In the developing spinal cord, restricted to a subpopulation of neurons in the dorsal and spinal ventral cord, probably D1 interneurons. Expressed in brain.

The protein localises to the cell membrane. Its function is as follows. Required for radial migration of cortical neurons in the superficial layer of the neocortex. Plays a role in the formation or maintenance of inhibitory synapses. May function by inhibiting the activity of NLGN2. The sequence is that of MAM domain-containing glycosylphosphatidylinositol anchor protein 1 (Mdga1) from Rattus norvegicus (Rat).